We begin with the raw amino-acid sequence, 1290 residues long: Nonribosomal peptide synthetase 6 (1290 aa).

The tract at residues 1 to 27 (MTAIDVPWLSTPRRDNSHGTRSNSSCQ) is disordered. The segment at 260–657 (SYQELDCQAS…AQVEHHLRSC (398 aa)) is adenylation. In terms of domain architecture, Carrier spans 775-851 (APETELERKL…GLAQTHRHPV (77 aa)). Ser-812 carries the O-(pantetheine 4'-phosphoryl)serine modification. A disordered region spans residues 846–870 (THRHPVRRAEVPRSSHDPDPFGRVR). Residues 852 to 870 (RRAEVPRSSHDPDPFGRVR) show a composition bias toward basic and acidic residues. The tract at residues 914–1162 (GGQLDPEQLR…PCMNIIPVRV (249 aa)) is condensation.

It belongs to the NRP synthetase family.

In terms of biological role, nonribosomal peptide synthesis (NRPS) is a key mechanism responsible for the biosynthesis of bioactive metabolites which are potentially contributing to organismal virulence. This is Nonribosomal peptide synthetase 6 (NRPS6) from Aspergillus fumigatus (strain ATCC MYA-4609 / CBS 101355 / FGSC A1100 / Af293) (Neosartorya fumigata).